The chain runs to 432 residues: Asparagine--tRNA ligase (432 aa).

This sequence belongs to the class-II aminoacyl-tRNA synthetase family. As to quaternary structure, homodimer.

Its subcellular location is the cytoplasm. It carries out the reaction tRNA(Asn) + L-asparagine + ATP = L-asparaginyl-tRNA(Asn) + AMP + diphosphate + H(+). The protein is Asparagine--tRNA ligase of Lactobacillus gasseri (strain ATCC 33323 / DSM 20243 / BCRC 14619 / CIP 102991 / JCM 1131 / KCTC 3163 / NCIMB 11718 / NCTC 13722 / AM63).